A 415-amino-acid polypeptide reads, in one-letter code: Probable G-protein coupled receptor 19 (415 aa).

Topologically, residues 1 to 69 (MVFAHRMDNS…LKPGEVATAS (69 aa)) are extracellular. 2 N-linked (GlcNAc...) asparagine glycosylation sites follow: Asn-25 and Asn-52. A helical transmembrane segment spans residues 70 to 90 (IFFGILWLFSIFGNSLVCLVI). Residues 91 to 102 (HRSRRTQSTTNY) lie on the Cytoplasmic side of the membrane. A helical membrane pass occupies residues 103-123 (FVVSMACADLLISVASTPFVL). Residues 124–143 (LQFTTGRWTLGSATCKVVRY) are Extracellular-facing. The cysteines at positions 138 and 210 are disulfide-linked. The chain crosses the membrane as a helical span at residues 144–161 (FQYLTPGVQIYVLLSICI). Over 162–182 (DRFYTIVYPLSFKVSREKAKK) the chain is Cytoplasmic. Residues 183-203 (MIAASWVFDAGFVTPVLFFYG) traverse the membrane as a helical segment. At 204-221 (SNWDSHCNYFLPSSWEGT) the chain is on the extracellular side. The chain crosses the membrane as a helical span at residues 222–242 (AYTVIHFLVGFVIPSVLIILF). Over 243-277 (YQKVIKYIWRIGTDGRTVRRTMNIVPRTKVKTIKM) the chain is Cytoplasmic. Residues 278–298 (FLILNLLFLLSWLPFHVAQLW) traverse the membrane as a helical segment. The Extracellular segment spans residues 299–309 (HPHEQDYKKSS). The chain crosses the membrane as a helical span at residues 310–325 (LVFTAITWISFSSSAS). At 326–415 (KPTLYSIYNA…INSNPPNTFV (90 aa)) the chain is on the cytoplasmic side.

Belongs to the G-protein coupled receptor 1 family. As to expression, abundant expression in the brain.

It localises to the cell membrane. G-protein coupled receptor that plays a role in the regulation of circadian rhythms and energy metabolism. Participates in maintaining proper circadian gene expression in the suprachiasmatic nucleus (SCN), the locus of the master circadian clock in the brain. May function as a coordinator of aging-associated metabolic dysfunction, stress response, DNA integrity management, and eventual senescence. Upon binding to adropin, modulates mitochondrial energy metabolism via the p44/42-PDK4 signaling pathway, influencing pyruvate dehydrogenase activity. The chain is Probable G-protein coupled receptor 19 (GPR19) from Homo sapiens (Human).